The sequence spans 186 residues: Protein C (186 aa).

Polar residues predominate over residues 1 to 15 (MSKTDWNASGLSRPS). The interval 1-45 (MSKTDWNASGLSRPSPSAHWPSRKPWQHGQKYQTTQDRTEPPARK) is disordered.

The protein belongs to the morbillivirus protein C family. Interacts with the phosphoprotein (via C-terminus); this interaction allows C to associate with the ribonucleocapsid.

Its subcellular location is the host nucleus. It is found in the host cytoplasmic vesicle. Its function is as follows. Ribonucleocapsid-associated protein that interacts with the phosphoprotein (P), thereby increasing replication accuracy and processivity of the polymerase complex. The sequence is that of Protein C (P/V/C) from Homo sapiens (Human).